The following is a 146-amino-acid chain: 3-hydroxyacyl-[acyl-carrier-protein] dehydratase FabZ (146 aa).

The active site involves His-49.

This sequence belongs to the thioester dehydratase family. FabZ subfamily.

It is found in the cytoplasm. The enzyme catalyses a (3R)-hydroxyacyl-[ACP] = a (2E)-enoyl-[ACP] + H2O. Functionally, involved in unsaturated fatty acids biosynthesis. Catalyzes the dehydration of short chain beta-hydroxyacyl-ACPs and long chain saturated and unsaturated beta-hydroxyacyl-ACPs. This Pseudomonas aeruginosa (strain LESB58) protein is 3-hydroxyacyl-[acyl-carrier-protein] dehydratase FabZ.